The primary structure comprises 121 residues: Urotensin-2 (121 aa).

A signal peptide spans 1–19 (MSKLVPCLLLLGCLGLLFA). The propeptide occupies 20 to 106 (LPVPDSRKEP…HLLARIKKPY (87 aa)). C115 and C120 are oxidised to a cystine.

The protein belongs to the urotensin-2 family.

The protein localises to the secreted. Its function is as follows. Highly potent vasoconstrictor. The polypeptide is Urotensin-2 (UTS2) (Sus scrofa (Pig)).